Consider the following 431-residue polypeptide: Glutamate-1-semialdehyde 2,1-aminomutase (431 aa).

Position 264 is an N6-(pyridoxal phosphate)lysine (K264).

The protein belongs to the class-III pyridoxal-phosphate-dependent aminotransferase family. HemL subfamily. Homodimer. It depends on pyridoxal 5'-phosphate as a cofactor.

Its subcellular location is the cytoplasm. It catalyses the reaction (S)-4-amino-5-oxopentanoate = 5-aminolevulinate. Its pathway is porphyrin-containing compound metabolism; protoporphyrin-IX biosynthesis; 5-aminolevulinate from L-glutamyl-tRNA(Glu): step 2/2. The polypeptide is Glutamate-1-semialdehyde 2,1-aminomutase (Clostridium beijerinckii (strain ATCC 51743 / NCIMB 8052) (Clostridium acetobutylicum)).